Here is a 154-residue protein sequence, read N- to C-terminus: Large ribosomal subunit protein uL13 (154 aa).

Belongs to the universal ribosomal protein uL13 family. Part of the 50S ribosomal subunit.

Its function is as follows. This protein is one of the early assembly proteins of the 50S ribosomal subunit, although it is not seen to bind rRNA by itself. It is important during the early stages of 50S assembly. The polypeptide is Large ribosomal subunit protein uL13 (Brucella abortus (strain S19)).